A 181-amino-acid polypeptide reads, in one-letter code: Dual-action ribosomal maturation protein DarP (181 aa).

This sequence belongs to the DarP family.

The protein localises to the cytoplasm. Functionally, member of a network of 50S ribosomal subunit biogenesis factors which assembles along the 30S-50S interface, preventing incorrect 23S rRNA structures from forming. Promotes peptidyl transferase center (PTC) maturation. The polypeptide is Dual-action ribosomal maturation protein DarP (Actinobacillus succinogenes (strain ATCC 55618 / DSM 22257 / CCUG 43843 / 130Z)).